Here is a 671-residue protein sequence, read N- to C-terminus: Protein cereblon (671 aa).

Positions 1 to 11 are enriched in acidic residues; the sequence is MDGEEAADIDE. 3 disordered regions span residues 1–59, 104–130, and 150–187; these read MDGE…VDGD, LTGT…PAQP, and GHNV…DAEA. Composition is skewed to low complexity over residues 39–51 and 105–115; these read QQQQ…SSGE and TGTTTPTPTAP. Over residues 162 to 173 the composition is skewed to polar residues; the sequence is SISSRHSGSDMS. Residues 309 to 537 form the Lon N-terminal domain; it reads RMLIFMHQHI…IIGSTLKQES (229 aa). The CULT domain maps to 536–645; the sequence is ESLFYCRYCN…LAGSSVRIGK (110 aa). Zn(2+) is bound by residues C541, C544, C610, and C613.

This sequence belongs to the CRBN family. In terms of assembly, likely a component of a DCX (DDB1-CUL4-X-box) protein ligase complex. May interact with pic/DDB1. In terms of processing, ubiquitinated.

The protein resides in the nucleus. It functions in the pathway protein modification; protein ubiquitination. Its function is as follows. Substrate recognition component of a DCX (DDB1-CUL4-X-box) E3 protein ligase complex that mediates the ubiquitination and subsequent proteasomal degradation of target proteins. Has an essential role in mediating growth by negatively regulating insulin signaling. It also has a role in maintaining presynaptic function in the neuromuscular junction synapses of third-instar larvae. This is Protein cereblon from Drosophila grimshawi (Hawaiian fruit fly).